The following is a 147-amino-acid chain: Hemoglobin subunit beta-1 (147 aa).

Residues 3–147 (EWTAAERRHV…VVSALGRQYH (145 aa)) enclose the Globin domain. Histidine 64 and histidine 93 together coordinate heme b.

It belongs to the globin family. Hb 1 is a heterotetramer of two alpha-1 and two beta-1 chains. Red blood cells.

In terms of biological role, involved in oxygen transport from gills to the various peripheral tissues. The polypeptide is Hemoglobin subunit beta-1 (hbb1) (Gadus morhua (Atlantic cod)).